We begin with the raw amino-acid sequence, 1612 residues long: DNA topoisomerase 2-beta (1612 aa).

N-acetylalanine is present on alanine 2. Position 3 is an N6-acetyllysine (lysine 3). Residues lysine 21 and lysine 22 each participate in a glycyl lysine isopeptide (Lys-Gly) (interchain with G-Cter in SUMO2) cross-link. ATP is bound by residues asparagine 100, asparagine 129, and 157–159 (SSN). Glycyl lysine isopeptide (Lys-Gly) (interchain with G-Cter in SUMO2) cross-links involve residues lysine 165 and lysine 166. 170–177 (GRNGYGAK) lines the ATP pocket. Glycyl lysine isopeptide (Lys-Gly) (interchain with G-Cter in SUMO2) cross-links involve residues lysine 216 and lysine 287. The tract at residues 351-353 (KKK) is interaction with DNA. Glycyl lysine isopeptide (Lys-Gly) (interchain with G-Cter in SUMO2) cross-links involve residues lysine 355 and lysine 361. 385–387 (QTK) contributes to the ATP binding site. Residues lysine 425, lysine 427, and lysine 434 each participate in a glycyl lysine isopeptide (Lys-Gly) (interchain with G-Cter in SUMO2) cross-link. The 118-residue stretch at 464–581 (CTLILTEGDS…SLLKHGFLEE (118 aa)) folds into the Toprim domain. 3 residues coordinate Mg(2+): glutamate 470, aspartate 550, and aspartate 552. Residues lysine 588, lysine 593, lysine 623, lysine 631, lysine 634, lysine 664, and lysine 700 each participate in a glycyl lysine isopeptide (Lys-Gly) (interchain with G-Cter in SUMO2) cross-link. Residues 724–1177 (IPSLVDGFKP…SPSDLWKEDL (454 aa)) enclose the Topo IIA-type catalytic domain. Catalysis depends on tyrosine 814, which acts as the O-(5'-phospho-DNA)-tyrosine intermediate. Residues 999–1008 (KLQTTLTCNS) form an interaction with DNA region. Lysine 1080 participates in a covalent cross-link: Glycyl lysine isopeptide (Lys-Gly) (interchain with G-Cter in SUMO2). Positions 1098–1128 (AWKEAQEKAAEEEDSQNQHDDSSSDSGTPSG) are disordered. Residues lysine 1202, lysine 1205, lysine 1214, and lysine 1215 each participate in a glycyl lysine isopeptide (Lys-Gly) (interchain with G-Cter in SUMO2) cross-link. Serine 1224 carries the post-translational modification Phosphoserine. Residues lysine 1238, lysine 1250, and lysine 1259 each participate in a glycyl lysine isopeptide (Lys-Gly) (interchain with G-Cter in SUMO2) cross-link. Residues 1245–1586 (LLKKKKGDPD…FTSEPPALPR (342 aa)) are disordered. Threonine 1280 is subject to Phosphothreonine. Residues lysine 1311 and lysine 1315 each participate in a glycyl lysine isopeptide (Lys-Gly) (interchain with G-Cter in SUMO2) cross-link. Composition is skewed to basic and acidic residues over residues 1322 to 1332 (PWSDDESKSES) and 1346 to 1358 (SLLR…RPKY). 5 positions are modified to phosphoserine: serine 1324, serine 1328, serine 1330, serine 1332, and serine 1346. Residue tyrosine 1358 is modified to Phosphotyrosine. Over residues 1362–1379 (FSEEEDDDAAAADDSNDL) the composition is skewed to acidic residues. Residues serine 1363 and serine 1376 each carry the phosphoserine modification. Lysine 1385 is covalently cross-linked (Glycyl lysine isopeptide (Lys-Gly) (interchain with G-Cter in SUMO2)). A Phosphoserine modification is found at serine 1387. Threonine 1390 is subject to Phosphothreonine. Serine 1400 is subject to Phosphoserine. Tyrosine 1408 carries the post-translational modification Phosphotyrosine. Serine 1411 bears the Phosphoserine mark. Over residues 1417–1429 (ATPEKSSNDKKSQ) the composition is skewed to basic and acidic residues. Lysine 1427 is covalently cross-linked (Glycyl lysine isopeptide (Lys-Gly) (interchain with G-Cter in SUMO2)). Serine 1428, serine 1439, and serine 1441 each carry phosphoserine. Lysine 1443 is covalently cross-linked (Glycyl lysine isopeptide (Lys-Gly) (interchain with G-Cter in SUMO2)). Residues 1443 to 1453 (KSEDDSAKFDS) show a composition bias toward basic and acidic residues. Phosphoserine is present on residues serine 1448, serine 1453, and serine 1460. Lysine 1477 is covalently cross-linked (Glycyl lysine isopeptide (Lys-Gly) (interchain with G-Cter in SUMO2)). The tract at residues 1493–1499 (KAKRAPK) is interaction with PLSCR1. Residues serine 1509, serine 1511, and serine 1513 each carry the phosphoserine modification. The segment covering 1526–1536 (GKGRGAKKRKA) has biased composition (basic residues). A phosphoserine mark is found at serine 1537 and serine 1539. The segment covering 1550–1561 (KPSKTASKKPKK) has biased composition (basic residues). Threonine 1562 is modified (phosphothreonine). Serine 1563 and serine 1568 each carry phosphoserine. Tyrosine 1596 carries the post-translational modification Phosphotyrosine. Serine 1600 is subject to Phosphoserine.

It belongs to the type II topoisomerase family. In terms of assembly, homodimer. Interacts with KIAA1210. Interacts with PLSCR1. The cofactor is Mg(2+). It depends on Mn(2+) as a cofactor. Requires Ca(2+) as cofactor.

Its subcellular location is the nucleus. It localises to the nucleolus. The protein resides in the nucleoplasm. The catalysed reaction is ATP-dependent breakage, passage and rejoining of double-stranded DNA.. In terms of biological role, key decatenating enzyme that alters DNA topology by binding to two double-stranded DNA molecules, generating a double-stranded break in one of the strands, passing the intact strand through the broken strand, and religating the broken strand. Plays a role in B-cell differentiation. The sequence is that of DNA topoisomerase 2-beta (Top2b) from Mus musculus (Mouse).